Reading from the N-terminus, the 221-residue chain is MRQRLTVSESKAIFHKEFPFVVPAVYRRLVDELIVELNLLKNQERFVADGVFAIGLTSIFLDFTKGYKPENQKGILLEAICKCTGFSASNLEQIALEAKKLANGLNTNEIKSLITDNNRDEKESTYKLINKNNHYSRIIAIGIYKLVDMQSNGFNKEEATENSYLDLVNNFGYTKERVEKDVNLYKSSLDKIEKALELIEMNIKDEKRRNKERVSRTKPGQ.

Positions 174–213 (TKERVEKDVNLYKSSLDKIEKALELIEMNIKDEKRRNKER) form a coiled coil.

It belongs to the THF1 family.

May be involved in photosynthetic membrane biogenesis. This is Protein Thf1 from Prochlorococcus marinus (strain MIT 9211).